Consider the following 877-residue polypeptide: Translation initiation factor IF-2 (877 aa).

The tract at residues 48–289 (SSFQNSAPAE…QITKRKERPL (242 aa)) is disordered. The span at 78 to 89 (RKNEKKPEENNT) shows a compositional bias: basic and acidic residues. The span at 92 to 101 (KSNRRRNNKR) shows a compositional bias: basic residues. The segment covering 102-116 (RSSDRARDNKERDAK) has biased composition (basic and acidic residues). Low complexity predominate over residues 123–132 (KAAALLQQFK). Composition is skewed to basic and acidic residues over residues 135-155 (QRAE…EYHE) and 162-189 (KEQS…EKKV). A compositionally biased stretch (basic residues) spans 277 to 286 (PRKQITKRKE). Residues 378–547 (KRPPVVTIMG…LLQADVMELK (170 aa)) form the tr-type G domain. Residues 387–394 (GHVDHGKT) form a G1 region. 387 to 394 (GHVDHGKT) provides a ligand contact to GTP. Positions 412 to 416 (GITQR) are G2. The interval 433 to 436 (DTPG) is G3. Residues 433–437 (DTPGH) and 487–490 (NKMD) each bind GTP. The interval 487–490 (NKMD) is G4. The tract at residues 523–525 (SAK) is G5.

This sequence belongs to the TRAFAC class translation factor GTPase superfamily. Classic translation factor GTPase family. IF-2 subfamily.

It is found in the cytoplasm. Functionally, one of the essential components for the initiation of protein synthesis. Protects formylmethionyl-tRNA from spontaneous hydrolysis and promotes its binding to the 30S ribosomal subunits. Also involved in the hydrolysis of GTP during the formation of the 70S ribosomal complex. The protein is Translation initiation factor IF-2 of Lactobacillus acidophilus (strain ATCC 700396 / NCK56 / N2 / NCFM).